We begin with the raw amino-acid sequence, 77 residues long: Apelin (77 aa).

The N-terminal stretch at 1-22 is a signal peptide; sequence MNLRRCVQALLLLWLCLSAVCG. The propeptide occupies 23 to 41; the sequence is GPLLQTSDGKEMEEGTIRY. The disordered stretch occupies residues 43–77; that stretch reads VQPRGPRSGPGPWQGGRRKFRRQRPRLSHKGPMPF. Positions 58–71 are enriched in basic residues; the sequence is GRRKFRRQRPRLSH. The residue at position 65 (Q65) is a Pyrrolidone carboxylic acid.

It belongs to the apelin family. Post-translationally, at least 5 active peptides may be produced by proteolytic processing of the peptide precursor.

It localises to the secreted. The protein resides in the extracellular space. Functionally, peptide hormone that functions as endogenous ligand for the G-protein-coupled apelin receptor (APLNR/APJ), that plays a role in cadiovascular homeostasis. Functions as a balanced agonist activating both G(i) protein pathway and beta-arrestin pathway of APLNR. Downstream G proteins activation, apelin can inhibit cAMP production and activate key intracellular effectors such as ERKs. On the other hand, APLNR activation induces beta-arrestin recruitment to the membrane leading to desensitization and internalization of the receptor. Apelin blunts cardiac hypertrophic induction from APLNR on response to pathological stimuli, but also induces myocardial hypertrophy under normal conditions. Apelin-36 dissociates more hardly than (pyroglu)apelin-13 from APLNR. Involved in the regulation of cardiac precursor cell movements during gastrulation and heart morphogenesis. Has an inhibitory effect on cytokine production in response to T-cell receptor/CD3 cross-linking; the oral intake of apelin in the colostrum and the milk might therefore modulate immune responses in neonates. Plays a role in early coronary blood vessels formation. Mediates myocardial contractility in an ERK1/2-dependent manner. May also have a role in the central control of body fluid homeostasis by influencing vasopressin release and drinking behavior. The protein is Apelin (APLN) of Bos taurus (Bovine).